The following is a 258-amino-acid chain: Synaptosomal-associated protein 29 (258 aa).

The interval 1–41 is disordered; that stretch reads MSAYPKSYNPFDDDGEDEGARPAPWRDARDLPDGPDAPADR. Basic and acidic residues predominate over residues 18 to 32; sequence EGARPAPWRDARDLP. Residues 76–107 are a coiled coil; that stretch reads ASSEELARQRGVLERTEKMVDKMDQDLKISQK. 3 positions are modified to phosphoserine: S77, S78, and S114. The interval 127-190 is disordered; sequence PVETPPEQNG…GSAVSTDAYP (64 aa). T130 and T137 each carry phosphothreonine. A compositionally biased stretch (polar residues) spans 132-144; the sequence is PEQNGTLASQPNS. S163, S182, S185, S204, and S210 each carry phosphoserine. The region spanning 196–258 is the t-SNARE coiled-coil homology domain; it reads QAYHQKIDSN…KSTERKVRQL (63 aa).

It belongs to the SNAP-25 family. As to quaternary structure, forms a SNARE complex, composed of VAMP8, SNAP29 and STX17, involved in fusion of autophagosome with lysosome. Interacts with multiple syntaxins including STX6. Interacts with EIPR1. Interacts with STX17; this interaction is increased in the absence of TMEM39A.

It localises to the cytoplasm. The protein localises to the golgi apparatus membrane. Its subcellular location is the cytoplasmic vesicle. It is found in the autophagosome membrane. The protein resides in the cell projection. It localises to the cilium membrane. Functionally, SNAREs, soluble N-ethylmaleimide-sensitive factor-attachment protein receptors, are essential proteins for fusion of cellular membranes. SNAREs localized on opposing membranes assemble to form a trans-SNARE complex, an extended, parallel four alpha-helical bundle that drives membrane fusion. SNAP29 is a SNARE involved in autophagy through the direct control of autophagosome membrane fusion with the lysososome membrane. Also plays a role in ciliogenesis by regulating membrane fusions. The sequence is that of Synaptosomal-associated protein 29 from Pongo abelii (Sumatran orangutan).